The chain runs to 306 residues: Elongation factor Ts (306 aa).

The interval 80–83 (TDFV) is involved in Mg(2+) ion dislocation from EF-Tu.

Belongs to the EF-Ts family.

It localises to the cytoplasm. In terms of biological role, associates with the EF-Tu.GDP complex and induces the exchange of GDP to GTP. It remains bound to the aminoacyl-tRNA.EF-Tu.GTP complex up to the GTP hydrolysis stage on the ribosome. This is Elongation factor Ts from Methylorubrum populi (strain ATCC BAA-705 / NCIMB 13946 / BJ001) (Methylobacterium populi).